The chain runs to 629 residues: Phosphomethylpyrimidine synthase (629 aa).

Positions 1-21 are disordered; it reads MSIKAKNAAHLRESAQVDSGS. Residues Asn-233, Met-262, Tyr-291, His-327, 347–349, 388–391, and Glu-427 contribute to the substrate site; these read SRG and DGLR. Position 431 (His-431) interacts with Zn(2+). Tyr-454 serves as a coordination point for substrate. His-495 contacts Zn(2+). [4Fe-4S] cluster contacts are provided by Cys-575, Cys-578, and Cys-583.

This sequence belongs to the ThiC family. As to quaternary structure, homodimer. It depends on [4Fe-4S] cluster as a cofactor.

It carries out the reaction 5-amino-1-(5-phospho-beta-D-ribosyl)imidazole + S-adenosyl-L-methionine = 4-amino-2-methyl-5-(phosphooxymethyl)pyrimidine + CO + 5'-deoxyadenosine + formate + L-methionine + 3 H(+). It participates in cofactor biosynthesis; thiamine diphosphate biosynthesis. Catalyzes the synthesis of the hydroxymethylpyrimidine phosphate (HMP-P) moiety of thiamine from aminoimidazole ribotide (AIR) in a radical S-adenosyl-L-methionine (SAM)-dependent reaction. The sequence is that of Phosphomethylpyrimidine synthase from Pseudomonas syringae pv. syringae (strain B728a).